Here is a 26-residue protein sequence, read N- to C-terminus: Small toxic protein ShoB (26 aa).

Residues 7–24 form a helical membrane-spanning segment; sequence LIKRVIKIIIAVLQLILL.

The protein resides in the membrane. Its function is as follows. Toxic component of a type I toxin-antitoxin (TA) system. May be a toxic protein; overexpression causes cessation of growth and rapid membrane depolarization. Overexpression induces stress-response and a number of membrane protein genes. The chain is Small toxic protein ShoB (shoB) from Escherichia coli (strain K12).